Here is a 570-residue protein sequence, read N- to C-terminus: Urease subunit alpha (570 aa).

The 440-residue stretch at 131–570 folds into the Urease domain; that stretch reads GGIDSHIHFI…LPMTQRYFLF (440 aa). Positions 136, 138, and 219 each coordinate Ni(2+). Residue K219 is modified to N6-carboxylysine. A substrate-binding site is contributed by H221. Ni(2+) contacts are provided by H248 and H274. The active-site Proton donor is H322. D362 contributes to the Ni(2+) binding site.

This sequence belongs to the metallo-dependent hydrolases superfamily. Urease alpha subunit family. Heterotrimer of UreA (gamma), UreB (beta) and UreC (alpha) subunits. Three heterotrimers associate to form the active enzyme. It depends on Ni cation as a cofactor. In terms of processing, carboxylation allows a single lysine to coordinate two nickel ions.

It localises to the cytoplasm. The catalysed reaction is urea + 2 H2O + H(+) = hydrogencarbonate + 2 NH4(+). The protein operates within nitrogen metabolism; urea degradation; CO(2) and NH(3) from urea (urease route): step 1/1. This is Urease subunit alpha from Trichodesmium erythraeum (strain IMS101).